A 306-amino-acid polypeptide reads, in one-letter code: Methionyl-tRNA formyltransferase (306 aa).

109 to 112 serves as a coordination point for (6S)-5,6,7,8-tetrahydrofolate; the sequence is SILP.

It belongs to the Fmt family.

The enzyme catalyses L-methionyl-tRNA(fMet) + (6R)-10-formyltetrahydrofolate = N-formyl-L-methionyl-tRNA(fMet) + (6S)-5,6,7,8-tetrahydrofolate + H(+). In terms of biological role, attaches a formyl group to the free amino group of methionyl-tRNA(fMet). The formyl group appears to play a dual role in the initiator identity of N-formylmethionyl-tRNA by promoting its recognition by IF2 and preventing the misappropriation of this tRNA by the elongation apparatus. In Herpetosiphon aurantiacus (strain ATCC 23779 / DSM 785 / 114-95), this protein is Methionyl-tRNA formyltransferase.